The sequence spans 497 residues: Probable cytosol aminopeptidase (497 aa).

The Mn(2+) site is built by Lys265 and Asp270. Lys277 is a catalytic residue. Mn(2+) contacts are provided by Asp288, Asp347, and Glu349. Arg351 is an active-site residue.

Belongs to the peptidase M17 family. It depends on Mn(2+) as a cofactor.

It is found in the cytoplasm. It catalyses the reaction Release of an N-terminal amino acid, Xaa-|-Yaa-, in which Xaa is preferably Leu, but may be other amino acids including Pro although not Arg or Lys, and Yaa may be Pro. Amino acid amides and methyl esters are also readily hydrolyzed, but rates on arylamides are exceedingly low.. It carries out the reaction Release of an N-terminal amino acid, preferentially leucine, but not glutamic or aspartic acids.. Functionally, presumably involved in the processing and regular turnover of intracellular proteins. Catalyzes the removal of unsubstituted N-terminal amino acids from various peptides. The polypeptide is Probable cytosol aminopeptidase (Geobacillus sp. (strain WCH70)).